We begin with the raw amino-acid sequence, 364 residues long: Spermatogenesis-associated protein 22 (364 aa).

Composition is skewed to polar residues over residues 1 to 13 (MKRN…TRST), 30 to 48 (QPLT…NASD), 73 to 108 (KTVN…SKSD), 137 to 169 (LMTN…LPNQ), and 177 to 189 (QTKS…STMR). Disordered stretches follow at residues 1–51 (MKRN…DNYD) and 70–189 (PLTK…STMR).

In terms of assembly, component of a multiprotein complex with MEIOB and RPA2. Interacts with MEIOB. Interacts with the complex BRME1:HSF2BP:BRCA2.

It localises to the chromosome. Meiosis-specific protein required for homologous recombination in meiosis I. The protein is Spermatogenesis-associated protein 22 (SPATA22) of Bos taurus (Bovine).